Consider the following 605-residue polypeptide: Ankyrin repeat domain-containing protein 13D (605 aa).

UIM domains follow at residues 482–501 (EDDD…AGTE) and 528–547 (EEQL…STES). The span at 538–554 (QESLQLSTESRGPESPQ) shows a compositional bias: low complexity. Residues 538–605 (QESLQLSTES…RILQLSLTEH (68 aa)) are disordered. At serine 552 the chain carries Phosphoserine. Threonine 556 bears the Phosphothreonine mark. Residues 564–575 (SFEEQLRLALEL) are compositionally biased toward low complexity. 2 UIM domains span residues 564–583 (SFEE…QEEL) and 589–605 (QEED…LTEH). The span at 576-589 (SSREQEELERRGQQ) shows a compositional bias: basic and acidic residues.

Interacts with EGFR (ubiquitinated); the interaction is direct and may regulate EGFR internalization.

The protein resides in the cell membrane. Its subcellular location is the late endosome. In terms of biological role, ubiquitin-binding protein that specifically recognizes and binds 'Lys-63'-linked ubiquitin. Does not bind 'Lys-48'-linked ubiquitin. Positively regulates the internalization of ligand-activated EGFR by binding to the Ub moiety of ubiquitinated EGFR at the cell membrane. In Mus musculus (Mouse), this protein is Ankyrin repeat domain-containing protein 13D (Ankrd13d).